Reading from the N-terminus, the 131-residue chain is MMNFRQRMGWIGVSLYLFVSAAAFYYVFEINETYNRLALEHVQLKPHEPHRGTTWTHSLKIRLLSLPFWLWAALFLIPYFQVFLFLYSCTRADPKTVGYCIIPICLAIICNRHQSFVKASNRISKLQLIDT.

2 helical membrane-spanning segments follow: residues 8–28 and 66–86; these read MGWI…YYVF and LPFW…FLFL.

Belongs to the LYSET family.

It is found in the golgi apparatus membrane. In terms of biological role, required for mannose-6-phosphate-dependent trafficking of lysosomal enzymes. LYSET bridges GlcNAc-1-phosphate transferase (GNPTAB), to the membrane-bound transcription factor site-1 protease (MBTPS1), thus allowing proteolytic activation of the GNPTAB. GNPTAB is involved in the regulation of M6P-dependent Golgi-to-lysosome trafficking of lysosomal enzymes. LYSET is thus an essential factor for maturation and delivery of lysosomal hydrolases. The protein is Lysosomal enzyme trafficking factor (lyset-b) of Xenopus laevis (African clawed frog).